A 353-amino-acid chain; its full sequence is Guanine nucleotide-binding protein subunit beta-5 (353 aa).

7 WD repeats span residues 61–100 (GHGNKVLCMDWCKDKRRIVSSSQDGKVIVWDSFTTNKEHA), 103–142 (MPCTWVMACAYAPSGCAIACGGLDNKCSVYPLTFDKNENM), 151–192 (MHTN…QSFH), 194–236 (HGAD…QAFE), 237–276 (THESDVNSVRYYPSGDAFASGSDDATCRLYDLRADREVAI), 278–320 (SKES…RVSI), and 323–352 (GHENRVSTLRVSPDGTAFCSGSWDHTLRVW).

The protein belongs to the WD repeat G protein beta family. Component of a complex composed of RGS9 (isoform RGS9-1), GNB5 and RGS9BP; within this complex, the presence of GNB5 stabilizes both itself and RGS9 and increases RGS9 GTPase-activating protein (GAP) activity. Interacts with RGS7, forming the RGS7-GNB5 complex; within this complex, the presence of GNB5 increases RGS7 GTPase-activating protein (GAP) activity. Interacts with GPR158; promotes the GTPase activator activity of the RGS7-GNB5 complex in absence of glycine, in contrast GTPase activator activity of the RGS7-GNB5 complex is inhibited in presence of glycine. Interacts with RGS6. Detected in brain.

It is found in the membrane. In terms of biological role, enhances GTPase-activating protein (GAP) activity of regulator of G protein signaling (RGS) proteins, such as RGS7 and RGS9, hence involved in the termination of the signaling initiated by the G protein coupled receptors (GPCRs) by accelerating the GTP hydrolysis on the G-alpha subunits, thereby promoting their inactivation. Increases RGS7 GTPase-activating protein (GAP) activity, thereby regulating mood and cognition. Increases RGS9 GTPase-activating protein (GAP) activity, hence contributes to the deactivation of G protein signaling initiated by D(2) dopamine receptors. May play an important role in neuronal signaling, including in the parasympathetic, but not sympathetic, control of heart rate. This Rattus norvegicus (Rat) protein is Guanine nucleotide-binding protein subunit beta-5 (Gnb5).